We begin with the raw amino-acid sequence, 1127 residues long: Disease resistance protein RPS6 (1127 aa).

Met1 carries the N-acetylmethionine modification. Residues 12-176 (WSYHVFPSFS…EIANDILGKM (165 aa)) form the TIR domain. Glu87 is an active-site residue. LRR repeat units lie at residues 197 to 221 (MSSLLHLESEEVRMVGIWGPSGIGK), 540 to 563 (IDETDELHIHESSFKGMHNLLFLK), 587 to 609 (PSRLRLLRFDRYPSKCLPSNFHP), 610 to 632 (ENLVKLQMQQSKLEKLWDGVHSL), 633 to 656 (AGLRNMDLRGSRNLKEIPDLSMAT), 658 to 679 (LETLKLSSCSSLVELPSSIQYL), 680 to 704 (NKLNDLDMSYCDHLETIPSGVNLKS), 766 to 790 (SPTLTRLTFSNNPSFVEVPSSIQNL), 791 to 813 (YQLEHLEIMNCRNLVTLPTGINL), 814 to 834 (DSLISLDLSHCSQLKTFPDIS), and 835 to 857 (TNISDLNLSYTAIEEVPLSIEKL).

As to quaternary structure, interacts with EDS1. In terms of tissue distribution, ubiquitous.

It carries out the reaction NAD(+) + H2O = ADP-D-ribose + nicotinamide + H(+). Functionally, disease resistance (R) protein that specifically recognizes the hopA1 type III effector avirulence protein from Pseudomonas syringae. Resistance proteins guard the plant against pathogens that contain an appropriate avirulence protein via an indirect interaction with this avirulence protein. That triggers a defense system including the hypersensitive response, which restricts the pathogen growth. This Arabidopsis thaliana (Mouse-ear cress) protein is Disease resistance protein RPS6.